A 404-amino-acid polypeptide reads, in one-letter code: Cysteine--tRNA ligase (404 aa).

Zn(2+) is bound at residue Cys14. Residues 16–26 (PTVYSDVHIGN) carry the 'HIGH' region motif. Zn(2+) is bound by residues Cys190, His216, and Glu220. The 'KMSKS' region motif lies at 248-252 (KMAKS). Residue Lys251 participates in ATP binding.

It belongs to the class-I aminoacyl-tRNA synthetase family. In terms of assembly, monomer. The cofactor is Zn(2+).

It is found in the cytoplasm. The enzyme catalyses tRNA(Cys) + L-cysteine + ATP = L-cysteinyl-tRNA(Cys) + AMP + diphosphate. In Mesomycoplasma hyopneumoniae (strain 232) (Mycoplasma hyopneumoniae), this protein is Cysteine--tRNA ligase.